A 423-amino-acid chain; its full sequence is Vitamin D3 receptor (423 aa).

Cysteine 24, cysteine 27, cysteine 41, cysteine 44, cysteine 60, cysteine 66, cysteine 76, and cysteine 79 together coordinate Zn(2+). 2 NR C4-type zinc fingers span residues cysteine 24–cysteine 44 and cysteine 60–cysteine 84. Positions cysteine 24–methionine 89 form a DNA-binding region, nuclear receptor. The tract at residues aspartate 97–glutamate 126 is hinge. The NR LBD domain occupies glutamate 127–glycine 419. Tyrosine 143 contributes to the calcitriol binding site. Positions methionine 159–serine 180 are disordered. Positions threonine 171–serine 180 are enriched in low complexity. Serine 233 contributes to the calcitriol binding site. The interval lysine 242 to lysine 260 is interaction with coactivator LXXLL motif. Positions 270, 274, 301, and 393 each coordinate calcitriol. The short motif at proline 412–asparagine 420 is the 9aaTAD element.

It belongs to the nuclear hormone receptor family. NR1 subfamily. Homodimer in the absence of bound vitamin D3. Heterodimer with RXRA after vitamin D3 binding. Interacts with MED1 and NCOA6. Interacts with MED1, NCOA1, NCOA2, NCOA3 and NCOA6 coactivators, leading to a strong increase of transcription of target genes. Interacts with the corepressor NCOR1. Interacts with SNW1. Interacts with IRX4, the interaction does not affect its transactivation activity. Interacts with CRY1. Interacts with CRY2 in a ligand-dependent manner. In terms of processing, ubiquitinated by UBR5, leading to its degradation: UBR5 specifically recognizes and binds ligand-bound VDR when it is not associated with coactivators (NCOAs). In presence of NCOAs, the UBR5-degron is not accessible, preventing its ubiquitination and degradation. In terms of tissue distribution, detected in intestine and kidney.

The protein resides in the nucleus. It localises to the cytoplasm. Nuclear receptor for calcitriol, the active form of vitamin D3 which mediates the action of this vitamin on cells. Enters the nucleus upon vitamin D3 binding where it forms heterodimers with the retinoid X receptor/RXR. The VDR-RXR heterodimers bind to specific response elements on DNA and activate the transcription of vitamin D3-responsive target genes. Plays a central role in calcium homeostasis. Also functions as a receptor for the secondary bile acid lithocholic acid (LCA) and its metabolites. This Rattus norvegicus (Rat) protein is Vitamin D3 receptor (Vdr).